We begin with the raw amino-acid sequence, 31 residues long: Photosystem II reaction center protein T (31 aa).

A helical membrane pass occupies residues 3–23 (ALVYVFLLTGTLMVIFFAIFF).

This sequence belongs to the PsbT family. PSII is composed of 1 copy each of membrane proteins PsbA, PsbB, PsbC, PsbD, PsbE, PsbF, PsbH, PsbI, PsbJ, PsbK, PsbL, PsbM, PsbT, PsbX, PsbY, PsbZ, Psb30/Ycf12, at least 3 peripheral proteins of the oxygen-evolving complex and a large number of cofactors. It forms dimeric complexes.

The protein localises to the plastid. It localises to the chloroplast thylakoid membrane. Its function is as follows. Found at the monomer-monomer interface of the photosystem II (PS II) dimer, plays a role in assembly and dimerization of PSII. PSII is a light-driven water plastoquinone oxidoreductase, using light energy to abstract electrons from H(2)O, generating a proton gradient subsequently used for ATP formation. In Pyropia yezoensis (Susabi-nori), this protein is Photosystem II reaction center protein T.